The primary structure comprises 398 residues: Succinate--CoA ligase [ADP-forming] subunit beta (398 aa).

An ATP-grasp domain is found at 9-254; it reads KRLLHTYGAP…LTEEDPKEIE (246 aa). Residues Lys-46, 53–55, Glu-109, Ala-112, and Glu-117 contribute to the ATP site; that span reads GRG. Residues Asn-209 and Asp-223 each contribute to the Mg(2+) site. Substrate is bound by residues Asn-274 and 331–333; that span reads GIM.

The protein belongs to the succinate/malate CoA ligase beta subunit family. In terms of assembly, heterotetramer of two alpha and two beta subunits. Mg(2+) is required as a cofactor.

It carries out the reaction succinate + ATP + CoA = succinyl-CoA + ADP + phosphate. The catalysed reaction is GTP + succinate + CoA = succinyl-CoA + GDP + phosphate. The protein operates within carbohydrate metabolism; tricarboxylic acid cycle; succinate from succinyl-CoA (ligase route): step 1/1. Functionally, succinyl-CoA synthetase functions in the citric acid cycle (TCA), coupling the hydrolysis of succinyl-CoA to the synthesis of either ATP or GTP and thus represents the only step of substrate-level phosphorylation in the TCA. The beta subunit provides nucleotide specificity of the enzyme and binds the substrate succinate, while the binding sites for coenzyme A and phosphate are found in the alpha subunit. This is Succinate--CoA ligase [ADP-forming] subunit beta from Brucella abortus (strain S19).